The chain runs to 76 residues: Beta-defensin 121 (76 aa).

The N-terminal stretch at 1-15 is a signal peptide; sequence MKLLLLLLTVTLLLA. 3 disulfides stabilise this stretch: Cys23-Cys50, Cys30-Cys44, and Cys34-Cys51.

This sequence belongs to the beta-defensin family. In terms of tissue distribution, abundant expression in the male reproductive tract only.

The protein localises to the secreted. Has antibacterial activity. This chain is Beta-defensin 121 (DEFB121), found in Homo sapiens (Human).